The chain runs to 508 residues: Aldehyde dehydrogenase family 7 member A1 (508 aa).

244–249 provides a ligand contact to NAD(+); sequence GSSKVG. Glutamate 266 acts as the Proton acceptor in catalysis. Cysteine 300 serves as the catalytic Nucleophile.

Belongs to the aldehyde dehydrogenase family. Homotetramer.

The catalysed reaction is an aldehyde + NAD(+) + H2O = a carboxylate + NADH + 2 H(+). The polypeptide is Aldehyde dehydrogenase family 7 member A1 (Pisum sativum (Garden pea)).